The primary structure comprises 920 residues: Puromycin-sensitive aminopeptidase (920 aa).

Substrate is bound by residues Glu-181 and 317–321 (GAMEN). His-353 serves as a coordination point for Zn(2+). Glu-354 serves as the catalytic Proton acceptor. Zn(2+) is bound by residues His-357 and Glu-376. 3'-nitrotyrosine is present on Tyr-465. Residues 727 to 731 (RRRFK) carry the Nuclear localization signal motif.

The protein belongs to the peptidase M1 family. Monomer. Zn(2+) serves as cofactor. Widely expressed. Highest expression in brain, particularly the striatum and hippocampus. Expressed in Sertoli cells.

Its subcellular location is the cytoplasm. It localises to the cytosol. The protein resides in the nucleus. It carries out the reaction Release of an N-terminal amino acid, preferentially alanine, from a wide range of peptides, amides and arylamides.. Strongly inhibited by bestatin, leuhistin, actinonin, amastatin, 1,10-phenanthroline, DFP, PCMBS, Zn(2+), Cd(2+), Co(2+), Cu(2+), Hg(2+), EDTA and puromycin. Not inhibited by PMSF, and only slightly inhibited by leupeptin and aprotinin. Activity is increased by Mg(2+) and Ca(2+). In terms of biological role, aminopeptidase with broad substrate specificity for several peptides. Involved in proteolytic events essential for cell growth and viability. May act as regulator of neuropeptide activity. Plays a role in the antigen-processing pathway for MHC class I molecules. Involved in the N-terminal trimming of cytotoxic T-cell epitope precursors. Digests the poly-Q peptides found in many cellular proteins. The chain is Puromycin-sensitive aminopeptidase (Npepps) from Mus musculus (Mouse).